The sequence spans 129 residues: HTH-type transcriptional regulator HmrR (129 aa).

The HTH merR-type domain occupies 1-68; the sequence is MNIGEASERS…VEECRQLLAL (68 aa). A DNA-binding region (H-T-H motif) is located at residues 4–23; it reads GEASERSGLPSKTIRYYEDI.

In terms of assembly, homodimer.

It localises to the cytoplasm. Functionally, regulates the transcription of actP. It detects cytoplasmic copper stress and activates transcription in response to increasing copper concentrations. In the absence of copper, it negatively regulates the transcription of actP. The sequence is that of HTH-type transcriptional regulator HmrR (hmrR) from Rhizobium leguminosarum bv. viciae.